Consider the following 1121-residue polypeptide: Myelin transcription factor 1 (1121 aa).

Disordered stretches follow at residues 1 to 156 (MSLE…SKGS) and 200 to 376 (EAAE…MTRG). The CCHHC-type 1 zinc-finger motif lies at 21 to 64 (PETTAADLSCPTPGCTGSGHVRGKYSRHRSLQSCPLAKKRKLEG). Cys-30, Cys-35, His-48, and Cys-54 together coordinate Zn(2+). Basic residues predominate over residues 41-50 (VRGKYSRHRS). Basic and acidic residues-rich tracts occupy residues 62–71 (LEGAEAEHLV) and 123–132 (DEIHRPETAE). A compositionally biased stretch (low complexity) spans 147–156 (GSATASSKGS). A compositionally biased stretch (acidic residues) spans 258–308 (EEEDEEEEEEEEEEEEDEEEEEEEEEEEEEEEEEEEEEEEEEEEEEEEEAA). The span at 346-358 (VRSDDDKDEDTHS) shows a compositional bias: basic and acidic residues. 2 CCHHC-type zinc fingers span residues 433–476 (SRAE…PPEI) and 477–520 (LAMH…KLAK). Zn(2+) contacts are provided by Cys-442, Cys-447, His-460, Cys-466, Cys-486, Cys-491, His-504, and Cys-510. Disordered regions lie at residues 517 to 540 (KLAK…SNSD) and 668 to 774 (TLDL…EERK). Residues 526-540 (QPQTGDPSKSSSNSD) show a composition bias toward polar residues. The span at 705-723 (SSTSAPSSSMTSPQSSQAS) shows a compositional bias: low complexity. Positions 724–733 (RQDEWDRPLD) are enriched in basic and acidic residues. Positions 759–770 (EADDQEVSEENF) are enriched in acidic residues. 4 consecutive CCHHC-type zinc fingers follow at residues 791 to 834 (KDIK…LRNL), 835 to 878 (MAAH…GVKV), 884 to 927 (DKED…QKEG), and 937 to 980 (KSLK…GKKG). Cys-800, Cys-805, His-818, Cys-824, Cys-844, Cys-849, His-862, Cys-868, Cys-893, Cys-898, His-911, Cys-917, Cys-946, Cys-951, His-964, and Cys-970 together coordinate Zn(2+).

This sequence belongs to the MYT1 family. Interacts with STEAP3. In terms of tissue distribution, mostly in developing nervous system. Expressed in neural progenitors and oligodendrocyte lineage cells. More highly expressed in oligodendrocyte progenitors than in differentiated oligodendrocytes.

Its subcellular location is the nucleus. Binds to the promoter region of genes encoding proteolipid proteins of the central nervous system. May play a role in the development of neurons and oligodendroglia in the CNS. May regulate a critical transition point in oligodendrocyte lineage development by modulating oligodendrocyte progenitor proliferation relative to terminal differentiation and up-regulation of myelin gene transcription. The polypeptide is Myelin transcription factor 1 (MYT1) (Homo sapiens (Human)).